The chain runs to 510 residues: Global transcription regulator sge1 (510 aa).

Disordered stretches follow at residues 94 to 152, 393 to 438, and 469 to 510; these read PPGE…ASRN, HPFM…QQHS, and LGGT…MGRL. A compositionally biased stretch (low complexity) spans 123-143; that stretch reads NTGMNGTATGANAANLSSAGS. Composition is skewed to polar residues over residues 471–480 and 501–510; these read GTNTDQSQPF and PGSNNSMGRL.

The protein belongs to the MIT1/WOR1 family.

The protein localises to the nucleus. Global transcriptional regulator of pathogenicity. Differentially regulates expression of effector genes. Also required for radial growth and production of asexual conidiospores, and plays a role in mycelium pigmentation. Not required for induction of Ave1, the effector that activates resistance mediated by the Ve1 immune receptor in tomato. The polypeptide is Global transcription regulator sge1 (Verticillium dahliae (strain VdLs.17 / ATCC MYA-4575 / FGSC 10137) (Verticillium wilt)).